A 214-amino-acid chain; its full sequence is External core antigen (214 aa).

Positions 1 to 19 (MQLFHLCLIISCTCPTLQA) are cleaved as a signal peptide. The HBEAG stretch occupies residues 25–27 (GWL). A disordered region spans residues 164 to 214 (PNAPILSTLPETTVVRRRDRGRSPRRRTPSPRRRRSQSPRRRRSQSRESQC). Residues 178 to 207 (VRRRDRGRSPRRRTPSPRRRRSQSPRRRRS) are compositionally biased toward basic residues. The stretch at 186-192 (SPRRRTP) is one 1; half-length repeat. The tract at residues 186–208 (SPRRRTPSPRRRRSQSPRRRRSQ) is 3 X 8 AA repeats of S-P-R-R-R-R-S-Q. A propeptide spanning residues 186–214 (SPRRRTPSPRRRRSQSPRRRRSQSRESQC) is cleaved from the precursor. A run of 2 repeats spans residues 193 to 200 (SPRRRRSQ) and 201 to 208 (SPRRRRSQ).

This sequence belongs to the orthohepadnavirus precore antigen family. In terms of assembly, homodimerizes. Post-translationally, phosphorylated. In terms of processing, cleaved by host furin.

Its subcellular location is the secreted. The protein resides in the host nucleus. May regulate immune response to the intracellular capsid in acting as a T-cell tolerogen, by having an immunoregulatory effect which prevents destruction of infected cells by cytotoxic T-cells. This immune regulation may predispose to chronicity during perinatal infections and prevent severe liver injury during adult infections. The chain is External core antigen from Homo sapiens (Human).